The primary structure comprises 309 residues: Methionyl-tRNA formyltransferase (309 aa).

Residue Ser109 to Pro112 participates in (6S)-5,6,7,8-tetrahydrofolate binding.

It belongs to the Fmt family.

The enzyme catalyses L-methionyl-tRNA(fMet) + (6R)-10-formyltetrahydrofolate = N-formyl-L-methionyl-tRNA(fMet) + (6S)-5,6,7,8-tetrahydrofolate + H(+). Its function is as follows. Attaches a formyl group to the free amino group of methionyl-tRNA(fMet). The formyl group appears to play a dual role in the initiator identity of N-formylmethionyl-tRNA by promoting its recognition by IF2 and preventing the misappropriation of this tRNA by the elongation apparatus. The polypeptide is Methionyl-tRNA formyltransferase (Chloroflexus aggregans (strain MD-66 / DSM 9485)).